The sequence spans 178 residues: Caveolin-1 (178 aa).

An N-acetylserine modification is found at S2. Residue S2 is modified to Phosphoserine. Residues 2-94 (SGGKYVDSEG…WKASFTTFTV (93 aa)) are required for homooligomerization. At 2-104 (SGGKYVDSEG…TKYWFYRLLS (103 aa)) the chain is on the cytoplasmic side. K5 is subject to N6-acetyllysine; alternate. K5 is covalently cross-linked (Glycyl lysine isopeptide (Lys-Gly) (interchain with G-Cter in ubiquitin); alternate). Y6 is modified (phosphotyrosine). S9 bears the Phosphoserine mark. The residue at position 14 (Y14) is a Phosphotyrosine; by ABL1. Y25 is subject to Phosphotyrosine. Glycyl lysine isopeptide (Lys-Gly) (interchain with G-Cter in ubiquitin) cross-links involve residues K26 and K30. S37 bears the Phosphoserine mark. Residues K39, K47, and K57 each participate in a glycyl lysine isopeptide (Lys-Gly) (interchain with G-Cter in ubiquitin) cross-link. The segment at 82 to 94 (DGIWKASFTTFTV) is interaction with CAVIN3. The helical intramembrane region spans 105–125 (ALFGIPMALIWGIYFAILSFL). Residues 126–178 (HIWAVVPCIKSFLIEIQCISRVYSIYIHTVCDPLFEAIGKIFSNVRISLQKEI) lie on the Cytoplasmic side of the membrane. The interval 131–142 (VPCIKSFLIEIQ) is interacts with SPRY1, SPRY2, SPRY3 and SPRY4. Residues C133, C143, and C156 are each lipidated (S-palmitoyl cysteine). Residues 149-160 (SIYIHTVCDPLF) are interacts with SPRY1, SPRY2, and SPRY4. An interacts with SPRY1, SPRY2, SPRY3 and SPRY4 region spans residues 167–178 (FSNVRISLQKEI).

This sequence belongs to the caveolin family. In terms of assembly, homooligomer. Interacts with GLIPR2. Interacts with NOSTRIN. Interacts with SNAP25 and STX1A. Interacts (via the N-terminus) with DPP4; the interaction is direct. Interacts with CTNNB1, CDH1 and JUP. Interacts with PACSIN2; this interaction induces membrane tubulation. Interacts with SLC7A9. Interacts with BMX and BTK. Interacts with TGFBR1. Interacts with CAVIN3 (via leucine-zipper domain) in a cholesterol-sensitive manner. Interacts with CAVIN1. Interacts with EHD2 in a cholesterol-dependent manner. Forms a ternary complex with UBXN6 and VCP; mediates CAV1 targeting to lysosomes for degradation. Interacts with ABCG1; this interaction regulates ABCG1-mediated cholesterol efflux. Interacts with NEU3; this interaction enhances NEU3 sialidase activity within caveola. Interacts (via C-terminus) with SPRY1, SPRY2 (via C-terminus), SPRY3, and SPRY4. Interacts with IGFBP5; this interaction allows trafficking of IGFBP5 from the plasma membrane to the nucleus. In terms of processing, phosphorylated at Tyr-14 by ABL1 in response to oxidative stress. Post-translationally, ubiquitinated. Undergo monoubiquitination and multi- and/or polyubiquitination. Monoubiquitination of N-terminal lysines promotes integration in a ternary complex with UBXN6 and VCP which promotes oligomeric CAV1 targeting to lysosomes for degradation. Ubiquitinated by ZNRF1; leading to degradation and modulation of the TLR4-mediated immune response.

It localises to the golgi apparatus membrane. The protein localises to the cell membrane. The protein resides in the membrane. Its subcellular location is the caveola. It is found in the membrane raft. Functionally, may act as a scaffolding protein within caveolar membranes. Forms a stable heterooligomeric complex with CAV2 that targets to lipid rafts and drives caveolae formation. Mediates the recruitment of CAVIN proteins (CAVIN1/2/3/4) to the caveolae. Interacts directly with G-protein alpha subunits and can functionally regulate their activity. Involved in the costimulatory signal essential for T-cell receptor (TCR)-mediated T-cell activation. Its binding to DPP4 induces T-cell proliferation and NF-kappa-B activation in a T-cell receptor/CD3-dependent manner. Recruits CTNNB1 to caveolar membranes and may regulate CTNNB1-mediated signaling through the Wnt pathway. Negatively regulates TGFB1-mediated activation of SMAD2/3 by mediating the internalization of TGFBR1 from membrane rafts leading to its subsequent degradation. Binds 20(S)-hydroxycholesterol (20(S)-OHC). The chain is Caveolin-1 (CAV1) from Aotus nancymaae (Ma's night monkey).